We begin with the raw amino-acid sequence, 307 residues long: 4-hydroxybenzoate octaprenyltransferase (307 aa).

A run of 7 helical transmembrane segments spans residues 27–47 (AGWLLLLWPTLGALWLAAGGF), 50–70 (WHLLAVFTLGTVLMRSAGCCI), 101–121 (LAVGAVLALAAFALVLTTNAL), 142–162 (CVAMPQAVLGVAFSFGIPMAF), 179–199 (AAVPWWAWGLLIGNLFWVLAY), 239–259 (LLAWGAIGFWQGLGVAFAAGL), and 285–305 (FRLNHWVGFAVFAGIVVDLGW).

The protein belongs to the UbiA prenyltransferase family. It depends on Mg(2+) as a cofactor.

The protein resides in the cell inner membrane. The enzyme catalyses all-trans-octaprenyl diphosphate + 4-hydroxybenzoate = 4-hydroxy-3-(all-trans-octaprenyl)benzoate + diphosphate. It participates in cofactor biosynthesis; ubiquinone biosynthesis. Functionally, catalyzes the prenylation of para-hydroxybenzoate (PHB) with an all-trans polyprenyl group. Mediates the second step in the final reaction sequence of ubiquinone-8 (UQ-8) biosynthesis, which is the condensation of the polyisoprenoid side chain with PHB, generating the first membrane-bound Q intermediate 3-octaprenyl-4-hydroxybenzoate. The sequence is that of 4-hydroxybenzoate octaprenyltransferase from Methylibium petroleiphilum (strain ATCC BAA-1232 / LMG 22953 / PM1).